A 451-amino-acid polypeptide reads, in one-letter code: MSHLPQEPEFEQAYGELASALENSSLFNEHPEYRTALAVAAIPERVIQFRVVWNDDKGNLQVNRGYRVQFNGALGPYKGGLRFHPSVNLSILKFLGFEQIFKNALTGLNMGGGKGGADFDPKGKSDAEIRRFCQAFMTELSKHIGAETDVPAGDIGVGGREIGYLFGAYRKFANRWEGVLTGKGLSWGGSLIRPEATGYGLVYYVEYMLKHANRGTFEGKRVALSGSGNVAQYAALKIIELGGSVVSLSDSKGALVAKEGSSFTPEQIHNIAALKIKHQALTTFEHDGQFTWIEGARPWVHVGKVDIALPSATQNEVSKEEAQALVDAGAFIVAEGSNMGCTAEAIDVFEAHRKEKGAEALWYAPGKASNCGGVAVSGLEMAQNSQRIQWTEKEVDDRLKAIMKDAFVAGLETAQKYVEAKEGELPSLIAGSNIAGFIKVAEAMHDQGDWF.

Residue lysine 114 is part of the active site.

Belongs to the Glu/Leu/Phe/Val dehydrogenases family. Homohexamer.

It catalyses the reaction L-glutamate + NADP(+) + H2O = 2-oxoglutarate + NH4(+) + NADPH + H(+). This Fusarium fujikuroi (Bakanae and foot rot disease fungus) protein is NADP-specific glutamate dehydrogenase (GDH2).